The following is a 363-amino-acid chain: tRNA-specific 2-thiouridylase MnmA (363 aa).

ATP-binding positions include 6–13 (AMSGGVDS) and leucine 32. The active-site Nucleophile is cysteine 101. Cysteine 101 and cysteine 193 are disulfide-bonded. Glycine 125 serves as a coordination point for ATP. An interaction with tRNA region spans residues 143-145 (KDQ). Cysteine 193 serves as the catalytic Cysteine persulfide intermediate.

The protein belongs to the MnmA/TRMU family.

It is found in the cytoplasm. It carries out the reaction S-sulfanyl-L-cysteinyl-[protein] + uridine(34) in tRNA + AH2 + ATP = 2-thiouridine(34) in tRNA + L-cysteinyl-[protein] + A + AMP + diphosphate + H(+). Functionally, catalyzes the 2-thiolation of uridine at the wobble position (U34) of tRNA, leading to the formation of s(2)U34. The sequence is that of tRNA-specific 2-thiouridylase MnmA from Mycobacterium marinum (strain ATCC BAA-535 / M).